The sequence spans 849 residues: Trehalose-phosphatase (849 aa).

Positions 1–558 (MPSGAQGNTQ…VKALESHMTT (558 aa)) are glycosyltransferase.

In the N-terminal section; belongs to the glycosyltransferase 20 family. It in the C-terminal section; belongs to the trehalose phosphatase family. Mg(2+) serves as cofactor.

It localises to the cytoplasm. It is found in the nucleus. The enzyme catalyses alpha,alpha-trehalose 6-phosphate + H2O = alpha,alpha-trehalose + phosphate. The protein operates within carbohydrate biosynthesis. Its function is as follows. Phosphatase catalytic subunit of the trehalose synthase complex that catalyzes the production of trehalose from glucose-6-phosphate and UDP-glucose in a two step process. The sequence is that of Trehalose-phosphatase (tps2) from Schizosaccharomyces pombe (strain 972 / ATCC 24843) (Fission yeast).